We begin with the raw amino-acid sequence, 569 residues long: Phosphatase and actin regulator 2 (569 aa).

The span at 1 to 13 shows a compositional bias: polar residues; the sequence is MGQTSVSALSPQP. The interval 1–47 is disordered; the sequence is MGQTSVSALSPQPGSVDGLDKASIANSDGPPAGSQTPPFKRKGKLST. Residue Ser-27 is modified to Phosphoserine. Phosphothreonine is present on Thr-36. An RPEL 1 repeat occupies 71-96; that stretch reads AVLERKISTRQSREELIRRGLLKELP. Disordered regions lie at residues 98–253 and 295–483; these read QDGD…TGKP and PTLP…QEAK. The span at 140 to 151 shows a compositional bias: basic and acidic residues; that stretch reads GPPREEQAEEKT. Positions 162 to 176 are enriched in low complexity; that stretch reads GSKASSSPSASSTSS. Residues 212-224 show a composition bias toward polar residues; that stretch reads LSPNTVTSETSSL. Ser-357 is subject to Phosphoserine. Residues 386–399 show a composition bias toward acidic residues; sequence TDDDDEEDDDDDST. 3 RPEL repeats span residues 412 to 437, 450 to 475, and 488 to 513; these read DTLA…QRTS, TKLV…KQKN, and RRLS…RFNE. Positions 423-444 are enriched in basic and acidic residues; that stretch reads SKKELEDKNILQRTSEEERQEL. Phosphoserine is present on Ser-457. Over residues 461–483 the composition is skewed to basic and acidic residues; the sequence is TTEELEQRSILKQKNEEEEQEAK. Ser-495 is modified (phosphoserine).

This sequence belongs to the phosphatase and actin regulator family. Binds PPP1CA and actin. As to expression, expressed in the brain with high levels in the cerebellum, specifically in the Purkinje cell layer, choroid plexus and thalamus (ventral, rhomboid and anterior nuclei). Moderate to high expression in the hippocampus, piriform cortex, olfactory bulb, entorhinal cortex, as well as in geniculate bodies, lamboid septal zone, preoptic area and ventral pallidum (at protein level).

The polypeptide is Phosphatase and actin regulator 2 (Phactr2) (Rattus norvegicus (Rat)).